The sequence spans 234 residues: Sugar fermentation stimulation protein A (234 aa).

The H-T-H motif DNA-binding region spans 201–220; sequence LLSEAQNKGVEVLAYKAELS.

Belongs to the SfsA family.

Binds to DNA non-specifically. Could be a regulatory factor involved in maltose metabolism. The protein is Sugar fermentation stimulation protein A of Salmonella dublin (strain CT_02021853).